The following is a 365-amino-acid chain: Cobalt-precorrin-5B C(1)-methyltransferase (365 aa).

It belongs to the CbiD family.

The enzyme catalyses Co-precorrin-5B + S-adenosyl-L-methionine = Co-precorrin-6A + S-adenosyl-L-homocysteine. Its pathway is cofactor biosynthesis; adenosylcobalamin biosynthesis; cob(II)yrinate a,c-diamide from sirohydrochlorin (anaerobic route): step 6/10. Its function is as follows. Catalyzes the methylation of C-1 in cobalt-precorrin-5B to form cobalt-precorrin-6A. The polypeptide is Cobalt-precorrin-5B C(1)-methyltransferase (Geobacillus sp. (strain WCH70)).